The chain runs to 147 residues: Hemoglobin subunit epsilon (147 aa).

One can recognise a Globin domain in the interval 3-147 (HFTAEEKAAV…VAIALAHKYH (145 aa)). Phosphoserine occurs at positions 14 and 51. 2 residues coordinate heme b: His64 and His93.

Belongs to the globin family. As to quaternary structure, heterotetramer of two alpha chains and two epsilon chains in early embryonic hemoglobin Gower-2; two zeta chains and two epsilon chains in early embryonic hemoglobin Gower-1. In terms of tissue distribution, red blood cells.

Functionally, the epsilon chain is a beta-type chain of early mammalian embryonic hemoglobin. This chain is Hemoglobin subunit epsilon (HBE1), found in Pan troglodytes (Chimpanzee).